We begin with the raw amino-acid sequence, 247 residues long: 5-oxoprolinase subunit A (247 aa).

Belongs to the LamB/PxpA family. As to quaternary structure, forms a complex composed of PxpA, PxpB and PxpC.

The catalysed reaction is 5-oxo-L-proline + ATP + 2 H2O = L-glutamate + ADP + phosphate + H(+). Its function is as follows. Catalyzes the cleavage of 5-oxoproline to form L-glutamate coupled to the hydrolysis of ATP to ADP and inorganic phosphate. This is 5-oxoprolinase subunit A from Vibrio vulnificus (strain CMCP6).